A 182-amino-acid polypeptide reads, in one-letter code: Inorganic pyrophosphatase (182 aa).

Residues K30, R44, and Y56 each contribute to the substrate site. 3 residues coordinate Mg(2+): D66, D71, and D103. Y142 is a substrate binding site.

Belongs to the PPase family. As to quaternary structure, homohexamer. Requires Mg(2+) as cofactor.

Its subcellular location is the cytoplasm. It catalyses the reaction diphosphate + H2O = 2 phosphate + H(+). Catalyzes the hydrolysis of inorganic pyrophosphate (PPi) forming two phosphate ions. The chain is Inorganic pyrophosphatase from Buchnera aphidicola subsp. Acyrthosiphon pisum (strain APS) (Acyrthosiphon pisum symbiotic bacterium).